Consider the following 952-residue polypeptide: Inactive atromentin synthetase invA6 (952 aa).

The tract at residues 58–462 (DSSVQTRSFS…NGRIKDTVIV (405 aa)) is adenylation (A) domain. One can recognise a Carrier domain in the interval 594–672 (APSTETEKTL…SLAKYVDSLV (79 aa)). The interval 599–669 (TEKTLGRLYA…VISSLAKYVD (71 aa)) is thiolation and peptide carrier (T) domain. Position 631 is an O-(pantetheine 4'-phosphoryl)serine (serine 631). The thioesterase (TE) domain stretch occupies residues 695 to 939 (PIFMVHPGIG…LMDFDHVSGF (245 aa)).

It belongs to the ATP-dependent AMP-binding enzyme family.

In terms of biological role, inactive atromentin synthetase homolog. Does not accept 4-hydroxyphenylpyruvate (4-HPP) as substrate. Both the adenylation (A) and the thioesterase (TE) domain of the invA6 enzyme are inactive. The chain is Inactive atromentin synthetase invA6 (invA6) from Paxillus involutus (Naked brimcap).